The sequence spans 1066 residues: MNHDFQALALESRGMGELLPTKKFWEPDDSTKDGQKGIFLGDDEWRETAWGASHHSMSQPIMVQRRSGQGFHGNSEVNAILSPRSESGGLGVSMVEYVLSSSPADKLDSRFRKGNFGTRDAETDGPEKGDQKGKASPFEEDQNRDLKQGDDDDSKINGRGLPNGMDADCKDFNRTPGSRQASPTEVVERLGPNTNPSEGLGPLPNPTANKPLVEEFSNPETQNLDAMEQVGLESLQFDYPGNQVPMDSSGATVGLFDYNSQQQLFQRTNALTVQQLTAAQQQQYALAAAQQPHIAGVFSAGLAPAAFVPNPYIISAAPPGTDPYTAAGLAAAATLAGPAVVPPQYYGVPWGVYPANLFQQQAAAAANNTASQQAASQAQPGQQQVLRAGAGQRPLTPNQGQQGQQAESLAAAAAANPTLAFGQGLATGMPGYQVLAPTAYYDQTGALVVGPGARTGLGAPVRLMAPTPVLISSAAAQAAAAAAAGGTASSLTGSTNGLFRPIGTQPPQQQQQQPSTNLQSNSFYGSSSLTNSSQSSSLFSHGPGQPGSTSLGFGSGNSLGAAIGSALSGFGSSVGSSASSSATRRESLSTSSDLYKRSSSSLAPIGQPFYNSLGFSSSPSPIGMPLPSQTPGHSLTPPPSLSSHGSSSSLHLGGLTNGSGRYISAAPGAEAKYRSASSTSSLFSSSSQLFPPSRLRYNRSDIMPSGRSRLLEDFRNNRFPNLQLRDLIGHIVEFSQDQHGSRFIQQKLERATPAERQMVFNEILQAAYQLMTDVFGNYVIQKFFEFGSLDQKLALATRIRGHVLPLALQMYGCRVIQKALESISSDQQVISEMVKELDGHVLKCVKDQNGNHVVQKCIECVQPQSLQFIIDAFKGQVFVLSTHPYGCRVIQRILEHCTAEQTLPILEELHQHTEQLVQDQYGNYVIQHVLEHGRPEDKSKIVSEIRGKVLALSQHKFASNVVEKCVTHASRAERALLIDEVCCQNDGPHSALYTMMKDQYANYVVQKMIDMAEPAQRKIIMHKIRPHITTLRKYTYGKHILAKLEKYYLKNSPDLGPIGGPPNGML.

Positions 1–260 (MNHDFQALAL…ATVGLFDYNS (260 aa)) are interaction with SNAPIN. S67, S82, and S102 each carry phosphoserine. Residues 106 to 204 (KLDSRFRKGN…NPSEGLGPLP (99 aa)) are disordered. Over residues 119–133 (RDAETDGPEKGDQKG) the composition is skewed to basic and acidic residues. 3 positions are modified to phosphoserine: S136, S178, and S182. Phosphothreonine is present on residues T184 and T396. Positions 494 to 553 (STNGLFRPIGTQPPQQQQQQPSTNLQSNSFYGSSSLTNSSQSSSLFSHGPGQPGSTSLGF) are disordered. Positions 505–514 (QPPQQQQQQP) are enriched in low complexity. Positions 515 to 525 (STNLQSNSFYG) are enriched in polar residues. A compositionally biased stretch (low complexity) spans 526–540 (SSSLTNSSQSSSLFS). Phosphoserine is present on residues S587 and S592. A disordered region spans residues 620–650 (SPIGMPLPSQTPGHSLTPPPSLSSHGSSSSL). Positions 630 to 650 (TPGHSLTPPPSLSSHGSSSSL) are enriched in low complexity. Position 674 is an omega-N-methylarginine (R674). Residues S684 and S700 each carry the phosphoserine modification. Positions 706–1048 (GRSRLLEDFR…HILAKLEKYY (343 aa)) constitute a PUM-HD domain. Pumilio repeat units follow at residues 726–761 (DLIG…MVFN), 762–797 (EILQ…ALAT), 798–835 (RIRG…EMVK), 836–871 (ELDG…FIID), 872–907 (AFKG…PILE), 908–943 (ELHQ…KIVS), 944–979 (EIRG…LLID), and 983–1022 (CQND…IIMH). The segment at 741–745 (SRFIQ) is adenine-nucleotide binding in RNA target. Residues 777–781 (NYVIQ) form a uracil-nucleotide binding in RNA target region. The tract at residues 813 to 817 (CRVIQ) is adenine-nucleotide binding in RNA target. The interval 851 to 855 (NHVVQ) is non-specific-nucleotide binding in RNA target. The interval 887–891 (CRVIQ) is adenine-nucleotide binding in RNA target. A uracil-nucleotide binding in RNA target region spans residues 923 to 927 (NYVIQ). A guanine-nucleotide binding in RNA target region spans residues 959-963 (SNVVE). The tract at residues 1002–1006 (NYVVQ) is uracil-nucleotide binding in RNA target.

In terms of assembly, homodimer; homodimerizes in vitro. Interacts with DAZ1, DAZL and NANOS1 via its pumilio repeats. Interacts with NANOS3. Interacts with SNAPIN. Recruits the CCR4-POP2-NOT deadenylase leading to translational inhibition and mRNA degradation. Interacts with DDX20. In case of viral infection, interacts with DHX58. Interacts with TRIM71 (via NHL repeats) in an RNA-dependent manner. In terms of tissue distribution, expressed in male germ cells of adult testis (at protein level). Highly expressed in testis and ovary. Predominantly expressed in stem cells and germ cells. Expressed at lower level in brain, heart, kidney, liver, muscle, placenta, intestine and stomach Expressed in cerebellum, corpus callosum, caudate nucleus, hippocampus, medulla oblongata and putamen. Expressed in all fetal tissues tested.

The protein resides in the cytoplasm. Its subcellular location is the cytoplasmic granule. It is found in the perinuclear region. Functionally, sequence-specific RNA-binding protein that acts as a post-transcriptional repressor by binding the 3'-UTR of mRNA targets. Binds to an RNA consensus sequence, the Pumilio Response Element (PRE), 5'-UGUANAUA-3', that is related to the Nanos Response Element (NRE) (, PubMed:21397187). Mediates post-transcriptional repression of transcripts via different mechanisms: acts via direct recruitment of the CCR4-POP2-NOT deadenylase leading to translational inhibition and mRNA degradation. Also mediates deadenylation-independent repression by promoting accessibility of miRNAs. Acts as a post-transcriptional repressor of E2F3 mRNAs by binding to its 3'-UTR and facilitating miRNA regulation. Plays a role in cytoplasmic sensing of viral infection. Represses a program of genes necessary to maintain genomic stability such as key mitotic, DNA repair and DNA replication factors. Its ability to repress those target mRNAs is regulated by the lncRNA NORAD (non-coding RNA activated by DNA damage) which, due to its high abundance and multitude of PUMILIO binding sites, is able to sequester a significant fraction of PUM1 and PUM2 in the cytoplasm. May regulate DCUN1D3 mRNA levels. May support proliferation and self-renewal of stem cells. Binds specifically to miRNA MIR199A precursor, with PUM1, regulates miRNA MIR199A expression at a postranscriptional level. The polypeptide is Pumilio homolog 2 (PUM2) (Homo sapiens (Human)).